We begin with the raw amino-acid sequence, 180 residues long: Thioredoxin 3 (180 aa).

Over 1–3 the chain is Cytoplasmic; sequence MAL. A helical; Signal-anchor for type II membrane protein membrane pass occupies residues 4-24; it reads ICIGSVCFSLFHIGVIILLII. Residues 25 to 180 are Lumenal-facing; sequence NYFSSHIKKI…FQKYCLEKAK (156 aa). The Thioredoxin domain occupies 29–176; the sequence is SHIKKIFPSF…IEKAFQKYCL (148 aa). Active-site nucleophile residues include Cys99 and Cys102. A disulfide bridge connects residues Cys99 and Cys102.

The protein belongs to the thioredoxin family. Post-translationally, the disulfide bond between Cys-99 and Cys-102 acts as a redox-active center and is reduced by thioredoxin reductase TRXR.

The protein resides in the endoplasmic reticulum membrane. Its function is as follows. Participates in various redox reactions through the reversible oxidation of its active center dithiol to a disulfide and catalyzes dithiol-disulfide exchange reactions. In Plasmodium falciparum (isolate 3D7), this protein is Thioredoxin 3.